Reading from the N-terminus, the 214-residue chain is uncharacterized protein (214 aa).

This is an uncharacterized protein from Rhodobacter capsulatus (Rhodopseudomonas capsulata).